A 427-amino-acid polypeptide reads, in one-letter code: Branched-chain-amino-acid aminotransferase, mitochondrial (427 aa).

Residues 1-47 constitute a mitochondrion transit peptide; that stretch reads MSLMFLRRAGNIKGRNIRFALQRGSVGYSQQSSEACKNFLNTTQLRT. K256 is subject to N6-(pyridoxal phosphate)lysine.

This sequence belongs to the class-IV pyridoxal-phosphate-dependent aminotransferase family. Pyridoxal 5'-phosphate is required as a cofactor.

It is found in the mitochondrion. The protein localises to the nucleus. The protein resides in the cytoplasm. It carries out the reaction L-leucine + 2-oxoglutarate = 4-methyl-2-oxopentanoate + L-glutamate. The catalysed reaction is L-isoleucine + 2-oxoglutarate = (S)-3-methyl-2-oxopentanoate + L-glutamate. The enzyme catalyses L-valine + 2-oxoglutarate = 3-methyl-2-oxobutanoate + L-glutamate. In terms of biological role, catalyzes the first reaction in the catabolism of the essential branched chain amino acids leucine, isoleucine, and valine. In Schizosaccharomyces pombe (strain 972 / ATCC 24843) (Fission yeast), this protein is Branched-chain-amino-acid aminotransferase, mitochondrial (eca39).